The following is a 452-amino-acid chain: Ribosome biogenesis protein YTM1 (452 aa).

The interval 17–98 is ubiquitin-like (UBL) domain; the sequence is IVSQPVVFTT…EETLEIEYIE (82 aa). WD repeat units follow at residues 110–148, 150–195, and 208–247; these read PHED…TASI, AHPA…NPMA, and LHTA…TDEV. The segment at 245 to 269 is disordered; that stretch reads DEVPEPALNERDRSKKRRRVEEGEV. Over residues 252–269 the composition is skewed to basic and acidic residues; it reads LNERDRSKKRRRVEEGEV. WD repeat units lie at residues 282 to 322, 325 to 364, 371 to 411, and 418 to 452; these read SHTA…CSHT, ASEK…TILT, MHPS…SAMA, and GSGQ…EQKV.

The protein belongs to the WD repeat WDR12/YTM1 family. As to quaternary structure, component of the NOP7 complex, composed of ERB1, NOP7 and YTM1. The complex is held together by ERB1, which interacts with NOP7 via its N-terminal domain and with YTM1 via a high-affinity interaction between the seven-bladed beta-propeller domains of the 2 proteins. The NOP7 complex associates with the 66S pre-ribosome. Interacts (via UBL domain) with MDN1 (via VWFA/MIDAS domain).

It is found in the nucleus. It localises to the nucleolus. Its subcellular location is the nucleoplasm. Its function is as follows. Component of the NOP7 complex, which is required for maturation of the 25S and 5.8S ribosomal RNAs and formation of the 60S ribosome. The sequence is that of Ribosome biogenesis protein YTM1 from Laccaria bicolor (strain S238N-H82 / ATCC MYA-4686) (Bicoloured deceiver).